Here is a 170-residue protein sequence, read N- to C-terminus: Adenine phosphoribosyltransferase (170 aa).

This sequence belongs to the purine/pyrimidine phosphoribosyltransferase family. As to quaternary structure, homodimer.

It localises to the cytoplasm. The enzyme catalyses AMP + diphosphate = 5-phospho-alpha-D-ribose 1-diphosphate + adenine. Its pathway is purine metabolism; AMP biosynthesis via salvage pathway; AMP from adenine: step 1/1. In terms of biological role, catalyzes a salvage reaction resulting in the formation of AMP, that is energically less costly than de novo synthesis. This chain is Adenine phosphoribosyltransferase, found in Bacillus pumilus (strain SAFR-032).